A 110-amino-acid polypeptide reads, in one-letter code: Coiled-coil-helix-coiled-coil-helix domain-containing protein 5 (110 aa).

Methionine 1 bears the N-acetylmethionine mark. CHCH domains follow at residues alanine 9–arginine 52 and arginine 55–serine 97. 4 consecutive short sequence motifs (cx9C motif) follow at residues cysteine 12–cysteine 22, cysteine 34–cysteine 44, cysteine 58–cysteine 68, and cysteine 79–cysteine 89. 4 cysteine pairs are disulfide-bonded: cysteine 12–cysteine 44, cysteine 22–cysteine 34, cysteine 58–cysteine 89, and cysteine 68–cysteine 79.

As to quaternary structure, monomer.

The protein resides in the mitochondrion intermembrane space. This is Coiled-coil-helix-coiled-coil-helix domain-containing protein 5 (Chchd5) from Mus musculus (Mouse).